The primary structure comprises 125 residues: Glycine cleavage system H protein (125 aa).

The region spanning 22–103 (VFVVGITENA…AFTAWIFKIK (82 aa)) is the Lipoyl-binding domain. Residue Lys-63 is modified to N6-lipoyllysine.

The protein belongs to the GcvH family. The glycine cleavage system is composed of four proteins: P, T, L and H. It depends on (R)-lipoate as a cofactor.

The glycine cleavage system catalyzes the degradation of glycine. The H protein shuttles the methylamine group of glycine from the P protein to the T protein. The chain is Glycine cleavage system H protein from Bordetella avium (strain 197N).